The primary structure comprises 337 residues: Monoacylglycerol lipase ABHD6 (337 aa).

Over M1–M8 the chain is Extracellular. A helical; Signal-anchor for type II membrane protein transmembrane segment spans residues F9–L29. Residues W30–D337 are Cytoplasmic-facing. The AB hydrolase-1 domain maps to P72–P313. F80 lines the (9Z)-octadecenoate pocket. Catalysis depends on S148, which acts as the Nucleophile. M149 lines the (9Z)-octadecenoate pocket. Catalysis depends on charge relay system residues D278 and H306. H306 is a (9Z)-octadecenoate binding site.

It belongs to the AB hydrolase superfamily.

The protein resides in the late endosome membrane. It localises to the lysosome membrane. The protein localises to the mitochondrion membrane. It catalyses the reaction Hydrolyzes glycerol monoesters of long-chain fatty acids.. The catalysed reaction is 1-octanoylglycerol + H2O = octanoate + glycerol + H(+). The enzyme catalyses 1-decanoylglycerol + H2O = decanoate + glycerol + H(+). It carries out the reaction 1-dodecanoylglycerol + H2O = dodecanoate + glycerol + H(+). It catalyses the reaction 1-tetradecanoylglycerol + H2O = tetradecanoate + glycerol + H(+). The catalysed reaction is 2-hexadecanoylglycerol + H2O = glycerol + hexadecanoate + H(+). The enzyme catalyses 2-(9Z-octadecenoyl)-glycerol + H2O = glycerol + (9Z)-octadecenoate + H(+). It carries out the reaction 1-(9Z-octadecenoyl)-glycerol + H2O = glycerol + (9Z)-octadecenoate + H(+). It catalyses the reaction 2-(9Z,12Z-octadecadienoyl)-glycerol + H2O = (9Z,12Z)-octadecadienoate + glycerol + H(+). The catalysed reaction is 2-(5Z,8Z,11Z,14Z-eicosatetraenoyl)-glycerol + H2O = glycerol + (5Z,8Z,11Z,14Z)-eicosatetraenoate + H(+). The enzyme catalyses 1-(5Z,8Z,11Z,14Z-eicosatetraenoyl)-glycerol + H2O = glycerol + (5Z,8Z,11Z,14Z)-eicosatetraenoate + H(+). It carries out the reaction 1-(9Z,12Z-octadecadienoyl)-glycerol + H2O = (9Z,12Z)-octadecadienoate + glycerol + H(+). It catalyses the reaction 3-(9Z-octadecenoyl)-sn-glycero-1-phospho-(3'-(9Z-octadecenoyl)-1'-sn-glycerol) + H2O = 3-(9Z-octadecenoyl)-sn-glycero-1-phospho-(1'-sn-glycerol) + (9Z)-octadecenoate + H(+). The catalysed reaction is (S,S)-2-(9Z-octadecenoyl)-sn-glycero-1-phospho-(2'-(9Z-octadecenoyl)-1'-sn-glycerol) + H2O = (S,S)-2-(9Z-octadecenoyl)-sn-glycero-1-phospho-(1'-sn-glycerol) + (9Z)-octadecenoate + H(+). The enzyme catalyses (R,R)-2-(9Z-octadecenoyl)-sn-glycero-3-phospho-(2'-(9Z-octadecenoyl)-3'-sn-glycerol) + H2O = (R,R)-2-(9Z-octadecenoyl)-sn-glycero-3-phospho-(3'-sn-glycerol) + (9Z)-octadecenoate + H(+). Its function is as follows. Lipase that preferentially hydrolysis medium-chain saturated monoacylglycerols including 2-arachidonoylglycerol. Through 2-arachidonoylglycerol degradation may regulate endocannabinoid signaling pathways. Also has a lysophosphatidyl lipase activity with a preference for lysophosphatidylglycerol among other lysophospholipids. Also able to degrade bis(monoacylglycero)phosphate (BMP) and constitutes the major enzyme for BMP catabolism. BMP, also known as lysobisphosphatidic acid, is enriched in late endosomes and lysosomes and plays a key role in the formation of intraluminal vesicles and in lipid sorting. The sequence is that of Monoacylglycerol lipase ABHD6 from Homo sapiens (Human).